The chain runs to 454 residues: Nucleoprotein (454 aa).

The segment at 1-62 (MSFVPGQENA…ATTQPNSGSV (62 aa)) is disordered. Over residues 11–21 (GSRSSSGSRSG) the composition is skewed to low complexity. Positions 49-61 (PKQTATTQPNSGS) are enriched in polar residues. The RNA-binding stretch occupies residues 56-197 (QPNSGSVVPH…GFYVEGSGRS (142 aa)). The CoV N NTD domain occupies 64–193 (PHYSWFSGIT…VLPQGFYVEG (130 aa)). Arg-109, Arg-125, and Arg-167 together coordinate RNA. Disordered stretches follow at residues 159–230 (KTTA…STVK), 249–292 (AGQP…KRGP), and 382–428 (DGGA…RELT). Ser-170 carries the phosphoserine; by host modification. Thr-177 bears the Phosphothreonine; by host mark. Low complexity predominate over residues 193–212 (GSGRSAPASRSGSRSQSRGP). Ser-194 is subject to Phosphoserine; by host. Over residues 215–227 (RARSSSNQRQPAS) the composition is skewed to polar residues. The CoV N CTD domain occupies 260-383 (AKEVRQKILN…ENLNAYQKDG (124 aa)). A compositionally biased stretch (basic residues) spans 267–277 (ILNKPRQKRTP). Residues 267–383 (ILNKPRQKRT…ENLNAYQKDG (117 aa)) form a dimerization region. A phosphoserine; by host mark is found at Ser-389 and Ser-424. Position 428 is a phosphothreonine; by host (Thr-428).

This sequence belongs to the betacoronavirus nucleocapsid protein family. Homooligomer. Both monomeric and oligomeric forms interact with RNA. Interacts with protein M. Interacts with NSP3; this interaction serves to tether the genome to the newly translated replicase-transcriptase complex at a very early stage of infection. In terms of processing, ADP-ribosylated. The ADP-ribosylation is retained in the virion during infection. Phosphorylated on serine and threonine residues.

It localises to the virion. The protein resides in the host endoplasmic reticulum-Golgi intermediate compartment. Its subcellular location is the host Golgi apparatus. In terms of biological role, packages the positive strand viral genome RNA into a helical ribonucleocapsid (RNP) and plays a fundamental role during virion assembly through its interactions with the viral genome and membrane protein M. Plays an important role in enhancing the efficiency of subgenomic viral RNA transcription as well as viral replication. This is Nucleoprotein from Murine coronavirus (strain S) (MHV-S).